The primary structure comprises 487 residues: MMSTTVRLNRFTYLTSTAKLTRYFCSHHLVDRSETALHEVIRIVSSPVGGLDDLEENLNQVSVSPSSNLVTQVIESCKNETSPRRLLRFFSWSCKSLGSSLHDKEFNYVLRVLAEKKDHTAMQILLSDLRKENRAMDKQTFSIVAETLVKVGKEEDAIGIFKILDKFSCPQDGFTVTAIISALCSRGHVKRALGVMHHHKDVISGNELSVYRSLLFGWSVQRNVKEARRVIQDMKSAGITPDLFCFNSLLTCLCERNVNRNPSGLVPEALNIMLEMRSYKIQPTSMSYNILLSCLGRTRRVRESCQILEQMKRSGCDPDTGSYYFVVRVLYLTGRFGKGNQIVDEMIERGFRPERKFYYDLIGVLCGVERVNFALQLFEKMKRSSVGGYGQVYDLLIPKLCKGGNFEKGRELWEEALSIDVTLSCSISLLDPSVTEVFKPMKMKEEAAMVDRRALNLKIHARMNKTKPKLKLKPKRRSKTKKKNLQH.

A mitochondrion-targeting transit peptide spans 1–90 (MMSTTVRLNR…TSPRRLLRFF (90 aa)). PPR repeat units follow at residues 137 to 171 (DKQT…SCPQ), 172 to 202 (DGFT…HKDV), 207 to 241 (ELSV…GITP), 242 to 283 (DLFC…KIQP), 284 to 318 (TSMS…GCDP), 319 to 353 (DTGS…GFRP), 354 to 388 (ERKF…SVGG), and 389 to 423 (YGQV…DVTL). The tract at residues 466 to 487 (TKPKLKLKPKRRSKTKKKNLQH) is disordered.

It belongs to the PPR family. P subfamily.

It is found in the mitochondrion. The sequence is that of Pentatricopeptide repeat-containing protein At5g61370, mitochondrial from Arabidopsis thaliana (Mouse-ear cress).